Here is a 189-residue protein sequence, read N- to C-terminus: Probable nicotinate-nucleotide adenylyltransferase (189 aa).

This sequence belongs to the NadD family.

It catalyses the reaction nicotinate beta-D-ribonucleotide + ATP + H(+) = deamido-NAD(+) + diphosphate. The protein operates within cofactor biosynthesis; NAD(+) biosynthesis; deamido-NAD(+) from nicotinate D-ribonucleotide: step 1/1. In terms of biological role, catalyzes the reversible adenylation of nicotinate mononucleotide (NaMN) to nicotinic acid adenine dinucleotide (NaAD). This is Probable nicotinate-nucleotide adenylyltransferase from Staphylococcus aureus (strain bovine RF122 / ET3-1).